Reading from the N-terminus, the 96-residue chain is MKTLLLTLVVVTIVCLDFGGGLICYMGPKTPRTCPPGQNLCYTKTWCDGFCGSRGKVVVLGCAATCPTVKPGVDITCCATDKCNPFPKTKAPWERP.

The first 21 residues, 1-21 (MKTLLLTLVVVTIVCLDFGGG), serve as a signal peptide directing secretion. 5 cysteine pairs are disulfide-bonded: Cys-24–Cys-41, Cys-34–Cys-62, Cys-47–Cys-51, Cys-66–Cys-77, and Cys-78–Cys-83.

The protein belongs to the three-finger toxin family. Long-chain subfamily. Type II alpha-neurotoxin sub-subfamily. In terms of tissue distribution, expressed by the venom gland.

The protein localises to the secreted. Potent long-chain postsynaptic neurotoxin. Pseudo-irreversibly inhibits the nicotinic acetylcholine receptor through competitive antagonism. The polypeptide is Alpha-elapitoxin-Al2b (Austrelaps labialis (Pygmy copperhead)).